The chain runs to 61 residues: Acetylcholinesterase toxin C (61 aa).

4 disulfide bridges follow: cysteine 3–cysteine 22, cysteine 17–cysteine 39, cysteine 41–cysteine 52, and cysteine 53–cysteine 59.

Belongs to the three-finger toxin family. Short-chain subfamily. Acn-esterase inhibitor sub-subfamily. Expressed by the venom gland.

It localises to the secreted. Its function is as follows. Inhibits acetylcholinesterase. The sequence is that of Acetylcholinesterase toxin C from Dendroaspis polylepis polylepis (Black mamba).